Here is a 95-residue protein sequence, read N- to C-terminus: Co-chaperonin GroES (95 aa).

Belongs to the GroES chaperonin family. In terms of assembly, heptamer of 7 subunits arranged in a ring. Interacts with the chaperonin GroEL.

The protein localises to the cytoplasm. Functionally, together with the chaperonin GroEL, plays an essential role in assisting protein folding. The GroEL-GroES system forms a nano-cage that allows encapsulation of the non-native substrate proteins and provides a physical environment optimized to promote and accelerate protein folding. GroES binds to the apical surface of the GroEL ring, thereby capping the opening of the GroEL channel. This is Co-chaperonin GroES from Desulfotalea psychrophila (strain LSv54 / DSM 12343).